A 57-amino-acid chain; its full sequence is Small hydrophobic protein (57 aa).

At 1–8 (MPAIQPPL) the chain is on the virion surface side. Residues 9-29 (YLTFLLLILLYRIITLYVWII) traverse the membrane as a helical segment. The Intravirion segment spans residues 30 to 57 (LTITYKTSVRHAALHQRSFFRWSFDHSL).

This sequence belongs to the rubulavirus small hydrophobic protein family. As to quaternary structure, interacts with host TNFRSF1A, RIPK1 and IRAK1; these interactions interfere with host NF-kappa-B activation at the level of receptor complexes. Interacts with host protein UBQLN4.

It localises to the virion membrane. It is found in the host cell membrane. Functionally, plays a role in the inhibition of the host NF-kappa-B pathway. This inhibition occurs at the receptor level, by preventing the signaling of TNFR1 as well as IL-1R and TLR3. This is Small hydrophobic protein (SH) from Homo sapiens (Human).